Reading from the N-terminus, the 555-residue chain is Glucose-6-phosphate isomerase (555 aa).

D-glucose 6-phosphate contacts are provided by residues 169 to 170 (GS), 219 to 224 (SKTFTT), glutamine 364, glutamate 368, histidine 399, and lysine 521. Glutamate 368 serves as the catalytic Proton donor. Active-site residues include histidine 399 and lysine 521.

This sequence belongs to the GPI family. As to quaternary structure, homodimer.

The protein resides in the cytoplasm. It localises to the cytosol. The enzyme catalyses alpha-D-glucose 6-phosphate = beta-D-fructose 6-phosphate. The protein operates within carbohydrate degradation; glycolysis; D-glyceraldehyde 3-phosphate and glycerone phosphate from D-glucose: step 2/4. In terms of biological role, in the cytoplasm, catalyzes the conversion of glucose-6-phosphate to fructose-6-phosphate, the second step in glycolysis, and the reverse reaction during gluconeogenesis. This chain is Glucose-6-phosphate isomerase (RAG2), found in Kluyveromyces lactis (strain ATCC 8585 / CBS 2359 / DSM 70799 / NBRC 1267 / NRRL Y-1140 / WM37) (Yeast).